Reading from the N-terminus, the 513-residue chain is Maturase K (513 aa).

This sequence belongs to the intron maturase 2 family. MatK subfamily.

It is found in the plastid. Its subcellular location is the chloroplast. Usually encoded in the trnK tRNA gene intron. Probably assists in splicing its own and other chloroplast group II introns. The protein is Maturase K of Typha latifolia (Bulrush).